Consider the following 214-residue polypeptide: Metalloproteinase inhibitor 3 (214 aa).

Residues 1-26 (MVFSTTAALSLLLALSSMQLSEVSEA) form the signal peptide. Residue Cys27 participates in Zn(2+) binding. Involved in metalloproteinase-binding stretches follow at residues 27–30 (CTCM) and 91–92 (ES). 6 cysteine pairs are disulfide-bonded: Cys27–Cys94, Cys29–Cys121, Cys39–Cys146, Cys148–Cys195, Cys153–Cys158, and Cys166–Cys187. The NTR domain occupies 27 to 146 (CTCMPNHPQE…GLNHRYQYGC (120 aa)). Asn210 carries N-linked (GlcNAc...) asparagine glycosylation.

This sequence belongs to the protease inhibitor I35 (TIMP) family. In terms of tissue distribution, expressed abundantly in brain and cartilage.

The protein localises to the secreted. It is found in the extracellular space. The protein resides in the extracellular matrix. Its function is as follows. Complexes with metalloproteinases (such as collagenases) and irreversibly inactivates them by binding to their catalytic zinc cofactor. May form part of a tissue-specific acute response to remodeling stimuli. In Scyliorhinus torazame (Cloudy catshark), this protein is Metalloproteinase inhibitor 3 (TIMP3).